Consider the following 381-residue polypeptide: Glucose-1-phosphate adenylyltransferase (381 aa).

Residues Tyr100, Gly165, 180–181 (EK), and Ser191 contribute to the alpha-D-glucose 1-phosphate site.

The protein belongs to the bacterial/plant glucose-1-phosphate adenylyltransferase family. In terms of assembly, homotetramer.

The catalysed reaction is alpha-D-glucose 1-phosphate + ATP + H(+) = ADP-alpha-D-glucose + diphosphate. It participates in glycan biosynthesis; glycogen biosynthesis. Involved in the biosynthesis of ADP-glucose, a building block required for the elongation reactions to produce glycogen. Catalyzes the reaction between ATP and alpha-D-glucose 1-phosphate (G1P) to produce pyrophosphate and ADP-Glc. The protein is Glucose-1-phosphate adenylyltransferase of Mycoplasma mobile (strain ATCC 43663 / 163K / NCTC 11711) (Mesomycoplasma mobile).